The following is a 479-amino-acid chain: Endo-beta-1,6-galactanase (479 aa).

Positions 1 to 20 (MRSIVLPSLALALFSQRARA) are cleaved as a signal peptide. Asn89 is a glycosylation site (N-linked (GlcNAc...) asparagine). The active-site Proton donor is Glu210. Asn271 carries N-linked (GlcNAc...) asparagine glycosylation. Glu311 serves as the catalytic Nucleophile. Asn358 carries N-linked (GlcNAc...) asparagine glycosylation.

It carries out the reaction Endohydrolysis of (1-&gt;6)-beta-D-galactosidic linkages in arabinogalactan proteins and (1-&gt;3):(1-&gt;6)-beta-galactans to yield galactose and beta-(1-&gt;6)-galactaobiose as the final products.. In terms of biological role, hydrolyzes galactooligomers with a degree of polymerization higher than 3. Hydrolyzes radish root arabinogalactan-protein. Does not hydrolyze dextran, arabinan, starch, laminarin, beta-1,4- and beta-1,3-galactans, larch wood arabinogalactan or acid-insoluble polygalacturonic acid. This is Endo-beta-1,6-galactanase from Hypocrea rufa (Trichoderma viride).